Consider the following 96-residue polypeptide: Prokineticin Bo8 (96 aa).

Residues 1–19 form the signal peptide; that stretch reads MKCFAQIVVLLLVIAFSHG. Intrachain disulfides connect cysteine 26–cysteine 38, cysteine 32–cysteine 50, cysteine 37–cysteine 78, cysteine 60–cysteine 86, and cysteine 80–cysteine 95.

Expressed by the skin glands.

The protein resides in the secreted. Potent agonist for both PKR1/PROKR1 and PKR2/PROKR2, and inducer of a potent and long-lasting hyperalgesia. Also potentiates capsaicin-induced TRPV1 current, when tested on DRG neurons. At subnanomolar concentrations, this protein both induces potent chemotaxis of macrophages and stimulates LPS-induced production of the pro-inflammatory cytokines IL-1 and IL-12. In vivo, potently stimulates the contraction of the guinea-pig gastrointestinal (GI) smooth muscle (nanomolar concentration). This chain is Prokineticin Bo8, found in Bombina orientalis (Oriental fire-bellied toad).